The chain runs to 212 residues: Uridine kinase (212 aa).

Gly-12–Thr-19 serves as a coordination point for ATP.

Belongs to the uridine kinase family.

It is found in the cytoplasm. The catalysed reaction is uridine + ATP = UMP + ADP + H(+). It carries out the reaction cytidine + ATP = CMP + ADP + H(+). It functions in the pathway pyrimidine metabolism; CTP biosynthesis via salvage pathway; CTP from cytidine: step 1/3. Its pathway is pyrimidine metabolism; UMP biosynthesis via salvage pathway; UMP from uridine: step 1/1. The protein is Uridine kinase of Streptococcus pneumoniae serotype 2 (strain D39 / NCTC 7466).